The following is a 147-amino-acid chain: Transcriptional repressor NrdR (147 aa).

The segment at 3 to 34 (CPFCGHEDTQVAETRESDEGDVIRRRRRCPSC) is a zinc-finger region. In terms of domain architecture, ATP-cone spans 49 to 139 (PAIVKKDGSR…VYRSFEGVDE (91 aa)).

This sequence belongs to the NrdR family. The cofactor is Zn(2+).

In terms of biological role, negatively regulates transcription of bacterial ribonucleotide reductase nrd genes and operons by binding to NrdR-boxes. The polypeptide is Transcriptional repressor NrdR (Methylibium petroleiphilum (strain ATCC BAA-1232 / LMG 22953 / PM1)).